The sequence spans 606 residues: Replication protein E1 (606 aa).

The Nuclear localization signal signature appears at 78–80 (KRK). 2 positions are modified to phosphoserine; by host: serine 83 and serine 91. Residues 90-99 (LSPRLESISL) carry the Nuclear export signal motif. The DNA-binding region stretch occupies residues 146–309 (GSGDVDIHYT…TILGHKSAEA (164 aa)). An SF3 helicase domain is found at 408-558 (INFIVFLTAL…FPMKADNTPQ (151 aa)). Position 434-441 (434-441 (GPPNSGKS)) interacts with ATP. Lysine 515 participates in a covalent cross-link: Glycyl lysine isopeptide (Lys-Gly) (interchain with G-Cter in SUMO). Positions 581-606 (DQEEEGEDGESQRAFQCSARSANEHL) are disordered. The segment covering 593 to 606 (RAFQCSARSANEHL) has biased composition (polar residues).

Belongs to the papillomaviridae E1 protein family. In terms of assembly, can form hexamers. Interacts with E2 protein; this interaction increases E1 DNA binding specificity. Interacts with host DNA polymerase subunit POLA2. Interacts with host single stranded DNA-binding protein RPA1. Interacts with host TOP1; this interaction stimulates the enzymatic activity of TOP1. Phosphorylated. In terms of processing, sumoylated.

The protein resides in the host nucleus. It catalyses the reaction Couples ATP hydrolysis with the unwinding of duplex DNA by translocating in the 3'-5' direction.. The enzyme catalyses ATP + H2O = ADP + phosphate + H(+). Functionally, ATP-dependent DNA 3'-5' helicase required for initiation of viral DNA replication. It forms a complex with the viral E2 protein. The E1-E2 complex binds to the replication origin which contains binding sites for both proteins. During the initial step, a dimer of E1 interacts with a dimer of protein E2 leading to a complex that binds the viral origin of replication with high specificity. Then, a second dimer of E1 displaces the E2 dimer in an ATP-dependent manner to form the E1 tetramer. Following this, two E1 monomers are added to each half of the site, which results in the formation of two E1 trimers on the viral ori. Subsequently, two hexamers will be created. The double hexamer acts as a bi-directional helicase machinery and unwinds the viral DNA and then recruits the host DNA polymerase to start replication. This is Replication protein E1 from Human papillomavirus 5.